Consider the following 134-residue polypeptide: Small ribosomal subunit protein uS8c (134 aa).

Belongs to the universal ribosomal protein uS8 family. In terms of assembly, part of the 30S ribosomal subunit.

It localises to the plastid. The protein resides in the chloroplast. In terms of biological role, one of the primary rRNA binding proteins, it binds directly to 16S rRNA central domain where it helps coordinate assembly of the platform of the 30S subunit. The polypeptide is Small ribosomal subunit protein uS8c (rps8) (Cucumis sativus (Cucumber)).